The primary structure comprises 46 residues: Esculentin-1GRa (46 aa).

Expressed by the skin glands.

The protein resides in the secreted. Its function is as follows. Antimicrobial peptide active against the Gram-positive bacterium S.aureus (MIC=12.5 uM) and against the Gram-negative bacterium E.coli (MIC=6 uM). Has no antifungal activity against C.albicans. Shows hemolytic activity against human erythrocytes only at high concentrations (LC(50)=210 uM). The polypeptide is Esculentin-1GRa (Odorrana grahami (Yunnanfu frog)).